The sequence spans 292 residues: 4-hydroxy-tetrahydrodipicolinate synthase (292 aa).

T45 serves as a coordination point for pyruvate. Y133 acts as the Proton donor/acceptor in catalysis. The active-site Schiff-base intermediate with substrate is K161. Position 203 (I203) interacts with pyruvate.

Belongs to the DapA family. In terms of assembly, homotetramer; dimer of dimers.

Its subcellular location is the cytoplasm. The enzyme catalyses L-aspartate 4-semialdehyde + pyruvate = (2S,4S)-4-hydroxy-2,3,4,5-tetrahydrodipicolinate + H2O + H(+). The protein operates within amino-acid biosynthesis; L-lysine biosynthesis via DAP pathway; (S)-tetrahydrodipicolinate from L-aspartate: step 3/4. In terms of biological role, catalyzes the condensation of (S)-aspartate-beta-semialdehyde [(S)-ASA] and pyruvate to 4-hydroxy-tetrahydrodipicolinate (HTPA). The protein is 4-hydroxy-tetrahydrodipicolinate synthase of Nitrosomonas eutropha (strain DSM 101675 / C91 / Nm57).